Here is a 194-residue protein sequence, read N- to C-terminus: MALRELKVCLLGDTGVGKSSIVWRFVEDSFDPNINPTIGASFMTKTVQYQNELHKFLIWDTAGQERFRALAPMYYRGSAAAIIVYDITKEETFSTLKNWVRELRQHGPPSIVVAIAGNKCDLTDVREVMERDAKDYADSIHAIFVETSAKNAININELFIEISRRIPSTDANPASGGKGFKLRRQPSEPKRSCC.

12–20 (GDTGVGKSS) contacts GTP. Residues 34–42 (INPTIGASF) carry the Effector region motif. GTP is bound by residues 60–64 (DTAGQ), 118–121 (NKCD), and 148–150 (SAK). A disordered region spans residues 170 to 194 (DANPASGGKGFKLRRQPSEPKRSCC). A compositionally biased stretch (basic and acidic residues) spans 185–194 (QPSEPKRSCC). S-geranylgeranyl cysteine attachment occurs at residues Cys-193 and Cys-194.

The protein belongs to the small GTPase superfamily. Rab family. Binds EEA1. Interacts (in its GTP-bound form) with RINL. Interacts directly with ZFYVE20. Interacts (in its GTP-bound form) with RABGEF1. In terms of tissue distribution, detected in brain and heart, and at lower levels in lung and spleen.

The protein localises to the endosome membrane. It localises to the cell membrane. It is found in the early endosome. Its subcellular location is the late endosome. The protein resides in the cell projection. The protein localises to the ruffle. It localises to the cytoplasmic vesicle. It is found in the phagosome. Its subcellular location is the phagosome membrane. In terms of biological role, plays a role in endocytosis and intracellular protein transport. Mediates trafficking of TF from early endosomes to recycling endosomes. Required for NGF-mediated endocytosis of NTRK1, and subsequent neurite outgrowth. Binds GTP and GDP and has low GTPase activity. Alternates between a GTP-bound active form and a GDP-bound inactive form. This is Ras-related protein Rab-22A (Rab22a) from Mus musculus (Mouse).